Here is a 250-residue protein sequence, read N- to C-terminus: tRNA pseudouridine synthase A (250 aa).

Asp52 (nucleophile) is an active-site residue. A substrate-binding site is contributed by Tyr111.

It belongs to the tRNA pseudouridine synthase TruA family. Homodimer.

The enzyme catalyses uridine(38/39/40) in tRNA = pseudouridine(38/39/40) in tRNA. Its function is as follows. Formation of pseudouridine at positions 38, 39 and 40 in the anticodon stem and loop of transfer RNAs. This chain is tRNA pseudouridine synthase A, found in Methylorubrum extorquens (strain PA1) (Methylobacterium extorquens).